Here is a 356-residue protein sequence, read N- to C-terminus: tRNA-splicing endonuclease subunit SEN2 (356 aa).

Active-site residues include Y268, H276, and K307.

This sequence belongs to the tRNA-intron endonuclease family. Heterotetramer composed of SEN2, SEN15, SEN34 and SEN54. Interacts directly with SEN54.

The catalysed reaction is pretRNA = a 3'-half-tRNA molecule with a 5'-OH end + a 5'-half-tRNA molecule with a 2',3'-cyclic phosphate end + an intron with a 2',3'-cyclic phosphate and a 5'-hydroxyl terminus.. In terms of biological role, constitutes one of the two catalytic subunit of the tRNA-splicing endonuclease complex, a complex responsible for identification and cleavage of the splice sites in pre-tRNA. It cleaves pre-tRNA at the 5'- and 3'-splice sites to release the intron. The products are an intron and two tRNA half-molecules bearing 2',3'-cyclic phosphate and 5'-OH termini. There are no conserved sequences at the splice sites, but the intron is invariably located at the same site in the gene, placing the splice sites an invariant distance from the constant structural features of the tRNA body. This subunit may anchor the endonuclease complex to the nuclear membrane. Probably carries the active site for 5'-splice site cleavage. The chain is tRNA-splicing endonuclease subunit SEN2 (SEN2) from Eremothecium gossypii (strain ATCC 10895 / CBS 109.51 / FGSC 9923 / NRRL Y-1056) (Yeast).